Here is a 446-residue protein sequence, read N- to C-terminus: N-succinylarginine dihydrolase (446 aa).

Substrate contacts are provided by residues 19–28, asparagine 110, and 137–138; these read AGLSFGNVAS and HR. Glutamate 174 is an active-site residue. Residue arginine 213 coordinates substrate. The active site involves histidine 249. Residues aspartate 251 and asparagine 364 each coordinate substrate. The active-site Nucleophile is cysteine 370.

It belongs to the succinylarginine dihydrolase family. Homodimer.

It catalyses the reaction N(2)-succinyl-L-arginine + 2 H2O + 2 H(+) = N(2)-succinyl-L-ornithine + 2 NH4(+) + CO2. The protein operates within amino-acid degradation; L-arginine degradation via AST pathway; L-glutamate and succinate from L-arginine: step 2/5. Functionally, catalyzes the hydrolysis of N(2)-succinylarginine into N(2)-succinylornithine, ammonia and CO(2). The chain is N-succinylarginine dihydrolase from Burkholderia lata (strain ATCC 17760 / DSM 23089 / LMG 22485 / NCIMB 9086 / R18194 / 383).